A 147-amino-acid polypeptide reads, in one-letter code: UPF0306 protein YE0465 (147 aa).

It belongs to the UPF0306 family.

This chain is UPF0306 protein YE0465, found in Yersinia enterocolitica serotype O:8 / biotype 1B (strain NCTC 13174 / 8081).